A 140-amino-acid chain; its full sequence is Large ribosomal subunit protein uL13 (140 aa).

Belongs to the universal ribosomal protein uL13 family. As to quaternary structure, part of the 50S ribosomal subunit.

In terms of biological role, this protein is one of the early assembly proteins of the 50S ribosomal subunit, although it is not seen to bind rRNA by itself. It is important during the early stages of 50S assembly. The sequence is that of Large ribosomal subunit protein uL13 from Methanosarcina barkeri (strain Fusaro / DSM 804).